Consider the following 760-residue polypeptide: Serine/threonine-protein kinase dkf-1 (760 aa).

2 Phorbol-ester/DAG-type zinc fingers span residues 103-153 and 194-244; these read PHVV…GIIV and PHTL…PSNC. Positions 316–444 constitute a PH domain; sequence KNLEGWMIHF…QFIKESLQPP (129 aa). Residues 464–725 form the Protein kinase domain; sequence VLSDKTLGSG…IEKCLEHGWL (262 aa). Residues 470 to 478 and Lys-493 contribute to the ATP site; that span reads LGSGQFGTV. The Proton acceptor role is filled by Asp-589. Thr-626 bears the Phosphothreonine mark.

This sequence belongs to the protein kinase superfamily. CAMK Ser/Thr protein kinase family. PKD subfamily. Mg(2+) serves as cofactor. Post-translationally, prolonged phosphorylation at Thr-626 results in ubiquitination and degradation.

Its subcellular location is the cytoplasm. It localises to the membrane. The catalysed reaction is L-seryl-[protein] + ATP = O-phospho-L-seryl-[protein] + ADP + H(+). It catalyses the reaction L-threonyl-[protein] + ATP = O-phospho-L-threonyl-[protein] + ADP + H(+). With respect to regulation, activated by DAG and phorbol esters. Phorbol-ester/DAG-type domain 1 binds phorbol ester with high affinity and mediates accumulation at the cell periphery. Phorbol-ester/DAG-type domain 2 binds phorbol ester with low affinity but may mediate initial contact, resulting in a conformational change allowing previously occluded domain 1 to anchor the kinase. Phosphorylation on Thr-626 is then also required for activation and may also result in a further conformational change. In terms of biological role, converts transient diacylglycerol (DAG) signals into prolonged physiological effects, independently of PKC. Role in the regulation of growth and neuromuscular control of movement. Involved in immune response to S.aureus bacterium by activating transcription factor hlh-30 downstream of phospholipase plc-1. The chain is Serine/threonine-protein kinase dkf-1 from Caenorhabditis briggsae.